The primary structure comprises 212 residues: uncharacterized protein (212 aa).

This is an uncharacterized protein from Archaeoglobus fulgidus (strain ATCC 49558 / DSM 4304 / JCM 9628 / NBRC 100126 / VC-16).